A 397-amino-acid polypeptide reads, in one-letter code: Argininosuccinate synthase (397 aa).

An ATP-binding site is contributed by 7–15 (AFSGGLDTT). Residue Tyr-84 coordinates L-citrulline. Gly-114 contacts ATP. 3 residues coordinate L-aspartate: Thr-116, Asn-120, and Asp-121. Residue Asn-120 participates in L-citrulline binding. Positions 124, 170, 179, 254, and 266 each coordinate L-citrulline.

The protein belongs to the argininosuccinate synthase family. Type 1 subfamily. Homotetramer.

The protein localises to the cytoplasm. It catalyses the reaction L-citrulline + L-aspartate + ATP = 2-(N(omega)-L-arginino)succinate + AMP + diphosphate + H(+). It participates in amino-acid biosynthesis; L-arginine biosynthesis; L-arginine from L-ornithine and carbamoyl phosphate: step 2/3. The chain is Argininosuccinate synthase from Haloquadratum walsbyi (strain DSM 16790 / HBSQ001).